Here is a 257-residue protein sequence, read N- to C-terminus: tRNA uridine(34) hydroxylase (257 aa).

Residues Asn128–Tyr222 enclose the Rhodanese domain. Cys182 serves as the catalytic Cysteine persulfide intermediate.

The protein belongs to the TrhO family.

It catalyses the reaction uridine(34) in tRNA + AH2 + O2 = 5-hydroxyuridine(34) in tRNA + A + H2O. Its function is as follows. Catalyzes oxygen-dependent 5-hydroxyuridine (ho5U) modification at position 34 in tRNAs. The chain is tRNA uridine(34) hydroxylase from Xylella fastidiosa (strain 9a5c).